The primary structure comprises 144 residues: Protein WAP-3 (144 aa).

The first 21 residues, 1–21 (MRSRSFLVLVAVFLICETLVA), serve as a signal peptide directing secretion. Residues 28-49 (RGPKGQGQDPVEGQDQDEGQGP) form a disordered region. A region of interest (8 X 6 AA approximate tandem repeats) is located at residue G34. A run of 8 repeats spans residues 34 to 39 (GQDPVE), 40 to 45 (GQDQDE), 46 to 51 (GQGPVK), 58 to 63 (GQDLVK), 64 to 69 (GQDPVE), 70 to 75 (GQDPVK), 76 to 81 (AQLPDK), and 82 to 87 (VQDPVK). The tract at residues 64-85 (GQDPVEGQDPVKAQLPDKVQDP) is disordered. The region spanning 97 to 144 (LFPKPGVCPKIIFCPLVNPPIKCWRDSHCPGVKKCCPSLCGKGCVTPR) is the WAP domain. 4 cysteine pairs are disulfide-bonded: C104–C132, C110–C136, C119–C131, and C125–C140.

As to expression, large intestine (relatively low levels).

The polypeptide is Protein WAP-3 (Sus scrofa (Pig)).